The primary structure comprises 270 residues: Shikimate dehydrogenase (NADP(+)) (270 aa).

Shikimate contacts are provided by residues 15-17 (SKS) and threonine 62. Residue lysine 66 is the Proton acceptor of the active site. Residue aspartate 78 participates in NADP(+) binding. 2 residues coordinate shikimate: asparagine 87 and aspartate 103. Residues 128 to 132 (GAGGA), 152 to 157 (NRTVDR), and leucine 213 contribute to the NADP(+) site. Tyrosine 215 contributes to the shikimate binding site. Glycine 237 contacts NADP(+).

Belongs to the shikimate dehydrogenase family. Homodimer.

It carries out the reaction shikimate + NADP(+) = 3-dehydroshikimate + NADPH + H(+). It participates in metabolic intermediate biosynthesis; chorismate biosynthesis; chorismate from D-erythrose 4-phosphate and phosphoenolpyruvate: step 4/7. Its function is as follows. Involved in the biosynthesis of the chorismate, which leads to the biosynthesis of aromatic amino acids. Catalyzes the reversible NADPH linked reduction of 3-dehydroshikimate (DHSA) to yield shikimate (SA). In Halorhodospira halophila (strain DSM 244 / SL1) (Ectothiorhodospira halophila (strain DSM 244 / SL1)), this protein is Shikimate dehydrogenase (NADP(+)).